Here is a 255-residue protein sequence, read N- to C-terminus: tRNA (guanine-N(7)-)-methyltransferase (255 aa).

Residues 1-35 form a disordered region; the sequence is MTRTNDASGGGKLPRKRFYRARAHSNPLSDSHFPV. Positions 13 to 23 are enriched in basic residues; sequence LPRKRFYRARA. S-adenosyl-L-methionine is bound by residues G75, 98–99, 131–132, and L151; these read EL and NS. The active site involves D154. Residue 229–231 coordinates S-adenosyl-L-methionine; that stretch reads TEE.

Belongs to the class I-like SAM-binding methyltransferase superfamily. TrmB family.

It is found in the nucleus. The catalysed reaction is guanosine(46) in tRNA + S-adenosyl-L-methionine = N(7)-methylguanosine(46) in tRNA + S-adenosyl-L-homocysteine. Its pathway is tRNA modification; N(7)-methylguanine-tRNA biosynthesis. Functionally, catalyzes the formation of N(7)-methylguanine at position 46 (m7G46) in tRNA. The protein is tRNA (guanine-N(7)-)-methyltransferase of Zea mays (Maize).